The sequence spans 653 residues: Sulfate transporter 1.2 (653 aa).

The segment at 1-30 is disordered; the sequence is MSSRAHPVDGSPATDGGHVPMKPSPTRHKV. Topologically, residues 1 to 91 are cytoplasmic; that stretch reads MSSRAHPVDG…GRNYTFKKFR (91 aa). Residues 92–112 traverse the membrane as a helical segment; it reads GDLISGLTIASLCIPQDIGYA. Topologically, residues 113–116 are extracellular; it reads KLAN. A helical transmembrane segment spans residues 117–137; that stretch reads LDPKYGLYSSFVPPLVYACMG. Residues 138–141 are Cytoplasmic-facing; that stretch reads SSRD. The helical transmembrane segment at 142–162 threads the bilayer; it reads IAIGPVAVVSLLLGTLLRAEI. Residues 163–173 are Extracellular-facing; it reads DPNTSPDEYLR. The next 2 membrane-spanning stretches (helical) occupy residues 174-194 and 195-215; these read LAFT…FFRL and GFLI…GAAI. The Extracellular portion of the chain corresponds to 216–253; it reads TIALQQLKGFLGIKKFTKKTDIISVLESVFKAAHHGWN. A helical membrane pass occupies residues 254-274; that stretch reads WQTILIGASFLTFLLTSKIIG. At 275-280 the chain is on the cytoplasmic side; it reads KKSKKL. The helical transmembrane segment at 281 to 301 threads the bilayer; sequence FWVPAIAPLISVIVSTFFVYI. The Extracellular segment spans residues 302 to 339; sequence TRADKQGVQIVKHLDQGINPSSFHLIYFTGDNLAKGIR. A helical transmembrane segment spans residues 340–360; sequence IGVVAGMVALTEAVAIGRTFA. Over 361-372 the chain is Cytoplasmic; it reads AMKDYQIDGNKE. Residues 373 to 393 form a helical membrane-spanning segment; sequence MVALGMMNVVGSMSSCYVATG. Residues 394–409 are Extracellular-facing; it reads SFSRSAVNFMAGCQTA. Residues 410–430 form a helical membrane-spanning segment; the sequence is VSNIIMSIVVLLTLLFLTPLF. Over 431-438 the chain is Cytoplasmic; the sequence is KYTPNAIL. A helical transmembrane segment spans residues 439-459; it reads AAIIINAVIPLIDIQAAILIF. The Extracellular portion of the chain corresponds to 460–466; it reads KVDKLDF. Residues 467–487 form a helical membrane-spanning segment; the sequence is IACIGAFFGVIFVSVEIGLLI. The Cytoplasmic portion of the chain corresponds to 488–653; the sequence is AVSISFAKIL…ACCPKLSNEV (166 aa). One can recognise an STAS domain in the interval 522–645; sequence QYPEATMVPG…LTVADAVEAC (124 aa).

Belongs to the SLC26A/SulP transporter (TC 2.A.53.1) family. Homodimer. Interacts with OASA1 through its STAS domain. In terms of tissue distribution, expressed in lateral root cap, root hairs, epidermal and cortical cells of roots.

It is found in the cell membrane. Interaction with OASA1 negatively impacts the transporter activity. Functionally, high-affinity H(+)/sulfate cotransporter that mediates the uptake of the environmental sulfate by plant roots. Plays a central role in the regulation of sulfate assimilation. Unable to transport molybdate. The chain is Sulfate transporter 1.2 (SULTR1;2) from Arabidopsis thaliana (Mouse-ear cress).